We begin with the raw amino-acid sequence, 85 residues long: UPF0386 protein RHE_CH01859 (85 aa).

It belongs to the UPF0386 family.

This Rhizobium etli (strain ATCC 51251 / DSM 11541 / JCM 21823 / NBRC 15573 / CFN 42) protein is UPF0386 protein RHE_CH01859.